Here is a 545-residue protein sequence, read N- to C-terminus: MAKRIIYNEQARRALERGIDILAESVAVTLGPKGRNVVLEKKFGAPQIINDGVTIAKEIELEDHIENTGVALIRQAASKTNDAAGDGTTTATVLAHAMVKAGLRNVAAGANAITLKKGIDKATEFLVGKIQENSKPISDSNAIAQCGTIAAGNDDEVGQMIANAMDKVGKEGVISLEEGKSMTTELEVTEGMRFDKGYISPYFATDTERMEAVLDEPYILLTDKKIALVQDLVPVLEQIAKTGKPLVIIAEDIEKEALATLVVNRLRGVLNVAAVKAPGFGDRRKAMLEDMAVLTNGQLITEDAGLKLENATLDMLGTGRRITINKETTTIVAEGNEQAVKARCDQIKKQMDETDSSYDKEKLQERLAKLAGGVAVIKVGAATETEMKDKKLRLEDAINATKAAVEEGIVPGGGTTLAHLSPILKEWADKNLEGEELIGANIVEASLTAPLMRIAENAGSNGAVIAENVKTKPFNDGFNAATGEYVDMSSAGIVDPAKVTRSGLQNAASIAGMVLTTECIVADLPEKKDSAAPAGAPGMGGDFDY.

ATP is bound by residues 29-32 (TLGP), 86-90 (DGTTT), Gly413, 479-481 (NAA), and Asp495.

The protein belongs to the chaperonin (HSP60) family. As to quaternary structure, forms a cylinder of 14 subunits composed of two heptameric rings stacked back-to-back. Interacts with the co-chaperonin GroES.

The protein resides in the cytoplasm. It carries out the reaction ATP + H2O + a folded polypeptide = ADP + phosphate + an unfolded polypeptide.. Together with its co-chaperonin GroES, plays an essential role in assisting protein folding. The GroEL-GroES system forms a nano-cage that allows encapsulation of the non-native substrate proteins and provides a physical environment optimized to promote and accelerate protein folding. This chain is Chaperonin GroEL 2, found in Prochlorococcus marinus (strain MIT 9301).